The following is a 206-amino-acid chain: uncharacterized protein (206 aa).

4 helical membrane-spanning segments follow: residues 9–29, 47–67, 74–94, and 150–170; these read ILSL…SVLT, LGVV…LAFL, FFVI…INTI, and IAVI…FYAF.

Belongs to the Rht family.

It is found in the cell membrane. This is an uncharacterized protein from Synechocystis sp. (strain ATCC 27184 / PCC 6803 / Kazusa).